Here is a 556-residue protein sequence, read N- to C-terminus: Olefin beta-lactone synthetase (556 aa).

Residues 187–195 (TSGSTGVPK), 321–326 (TPYGAT), aspartate 430, and arginine 445 each bind ATP.

Belongs to the ATP-dependent AMP-binding enzyme family. In terms of assembly, monomer. Forms a complex with OleB and OleD.

The protein resides in the cytoplasm. It carries out the reaction a (2R,3S)-2-alkyl-3-hydroxyalkanoate + ATP = a cis-3-alkyl-4-alkyloxetan-2-one + AMP + diphosphate. Involved in olefin biosynthesis. Catalyzes the conversion of 2-alkyl-3-hydroxyalkanoic acids to beta-lactones in the presence of ATP. The polypeptide is Olefin beta-lactone synthetase (Xanthomonas campestris pv. campestris (strain ATCC 33913 / DSM 3586 / NCPPB 528 / LMG 568 / P 25)).